The sequence spans 2832 residues: MLQNTTQSNLPREPEAKQIDYNDSIRSTYFSIDDLRACGASLAEKGTSALPGFFPFEFRARHRENEKEILRVYRATAADVEAGASITPAAEWLLDNHHVVEEAIQEVRRDFPRRFYRQLPTLSVSGTVIPRTMALAWLYVAHTHSTVTRESITAMVEGFQEHETLKIGELWALPSILRFVLIENLRRIAIRVERSRGMRRKANEVADQLIRLNDPEGCRTLLVESEALAADNTFIAQLLYRMRDGSQSSGAVIAWIEERLERRGTDVEEALVAEQNRLSSGNATMSNIIRSLREIDDTDWAVWFESVSKIDATLREGSDYAALDFGSRNTYRDTIEKLARRSGHSEHEVTEIAIEMVEEAKAAAAVEAPLQEPNVGSFLVGKQRLALEKRIGYSPSIFQHLIRSVRKLDWFAIAGPNILLTILAMIVVYAFVSPMDIPSGAKLIMLLLFALPASEGAMGLFNTVFTLFAKPSRLVGYEFLDGIPEDARTLVVVPCLIAKRDHVDELVRNLEVHYLANPRGEIYFALLSDWADSKSEEAPADTDVLEYAKREIASLSARYAYDGKTRFFLLHRRRLYNEAEGVWMGWERKRGKLHELNLLLRGDRDTSFLQGANMVPEGVQYVMTLDSDTRLMRDAVTKLVGKLYHPINRPVVNPRTQEVVTGYSLLQPRVTPSLTTGSEASAFQRIFTINRGIDPYVFTVSDVYQDIAGEGSFTGKGLYHVDAFEAALKSRIEENAVLSHDLLEGSYARCALVTDIELVEDFPIRYEVEMSRQHRWARGDWQLLPYIFNPKNGLSMLGRWKMYDNLRRSLIPVAWLAASVMGWYYMEPTPALIWQLVLIFSLFVAPTLSLISGIMPRRNDIVARAHLHTVLSDIRAANAQVALRIVFIAHNAAMMADAIVRSLYRTFVSRKLMLEWRTAAQVQSAGHGSIGDYFRAMWTAPALALVSLALAAISDTGLPFIGLPFALIWAASPAVAWFVSQSAETEDQLVVSEEAIEEMRKIARRTWRYFEAFVTAEQNFLPPDNFQETPQPVLAERTSPTNIGVYLLSVMSARSFGWIGFEETITRLEQTIATIDRMPKYRGHLFNWYRTRGLEPMEPRYVSSVDSGNLAGHLIAVSSMCREWAEAPSAHVQGNLDGIGDVAAILKEALNELPDDRKTVRPLRRLVEERIAGFQNALAAVKRERELASIRVINLAVLARDMHKLTVNLDHEVRTVQSGEVATWAGSLVAACEAHIADGVFDLGAIEALRQRLLVLKERARDIAFSMDFSFLFRPERRLLSIGYRVNANELDEACYDLLASEARLTSLFAIAKGDLPTEHWYKLGRPIVPIGARGALVSWSGSMFEYLMPPLVMQERQGGILNQTNNLVVQEQINHGRRLGTPWGISEAAFNARDHELTYQYTNFGVPTLGLKRGLGQNAVIAPYASILACMYDPKSALANLARLREVGALGAYGYHDAVDFTPTRVPEGQKCAVVRNYYAHHHGMSVAAVANVVFNGQLREWFHADPVIEAAELLLQEKAPRDIPVMAAKREPEALGKGQADLLRPEVRVVEDPINQDRETVLLSNGHYSVMLTATGAGYARWNGQSVTRWTPDPVEDRTGTFIFLRDTVTGDWWSATAEPRRAPGEKTVTRFGDDKAEFVKTVGDLTSEVECIVATEHDAEGRRVILLNTGTEDRFIEVTSYAEPVLAMDDADSSHPTFSKMFLRTEISRHGDVIWVSRNKRSPGDPDIEVAHLVTDNAGSERHTQAETDRRRFLGQGRTLAEAAAFDPGATLSGTDGFTLDPIVSLRRVVRVPAGKKVSVIFWTIAAPDREGVDRAIDRYRHPETFNHELIHAWTRSQVQMRHVGITSKEAASFQMLGRYLVYPDMHLRADAETVKTGLASQSALWPLAISGDFPIFCLRINDDGDLGIAREALRAQEYLRARGITADLVVVNERASSYAQDLQHTLDSMCENLRLRGLSDGPRQHIFAVRRDLMEPETWSTLISASRAVFHARNGTISDQIARATSLYSKSSEKKEEGAEMLLPVIREADARTAVELDGGDLDFWNGFGGFAEDGREYAVRLRGGEATPQPWINVISNEQFGFHVSAEGAAFSWSRNSRDYQLTPWTNDAVVNRPGEAIFVRDMASGAVLTPYAALSRRKSALFETRHGLGYSRFLSTQDELEIEAMHTVHRTLPAKLVRLTIRNRSSAARKLRVYGYAEWVLGNNRSRTAPFVLSEWDESAKTLVATNPYSIDYPGRCAFFASDGDIAGYTASRREFLGRAGGILAPQAVISGAELTGSTDVDGDACAALATDITVEAGVERQVTFFLGDADNPDQVRAVLEELRADSFGAALEAAKAFWGDFTGVVKVETPDRAFNHMINHWLPYQALGCRIMARSAFYQASGAFGFRDQLQDTLAFLIHRPALARAQILNAAARQFVEGDVQHWWLPGTDAGVRTMISDDVVWLAHAVAHYCAVTGEEDILKEKVPFITGPALEEGQHDSFYKPDVADEVGDVYEHCARALDLAIHRTGANGLPLILGGDWNDGMNRVGEAGEGTSVWLGWFLAGTLRAFLPYARARKDKPRVALWERHLEALKDALEQAGWDGDYYRRGYYDDDTPLGSAENGECRIDSIAQSWSTLSGEGDKERSLRAMDAVMAELVDPEKRIVRLFTPPLETTKQDPGYIKAYPPGVRENGGQYTHAATWVVLAFAAQERAEEAWRTFRMLNPVSHALSQVDAEHYRVEPYVVAADIYGEGALAGRGGWTWYTGSAGWLYRAGVEGILGIRKRGDKLLIRPVLPSEWPGYSAEVRVNGTTHRISVSRDSKSGEPVVSVNNSVTKNAHEGVLL.

Helical transmembrane passes span 411–431 (FAIA…VYAF), 444–464 (IMLL…FNTV), 810–830 (LIPV…EPTP), 831–851 (ALIW…LSLI), 880–900 (QVAL…DAIV), 938–958 (WTAP…DTGL), and 959–979 (PFIG…AWFV). A Glycoamylase-like domain is found at 1299 to 1506 (LASEARLTSL…NGQLREWFHA (208 aa)).

Belongs to the NdvB family.

The protein localises to the cell inner membrane. The catalysed reaction is [(1-&gt;2)-beta-D-glucosyl](n) + UDP-alpha-D-glucose = [(1-&gt;2)-beta-D-glucosyl](n+1) + UDP + H(+). Its function is as follows. Involved in the biosynthesis of cyclic beta-(1,2)-glucan. It seems that NdvB is involved in three enzymatic activities. First, it may catalyze the transfer of the first glucose from UDP-Glc to an unknown amino acid. In the second enzymatic activity (UDP-Glc:beta-(1,2) oligosaccharide glucosyltransferase), it may be responsible for chain elongation. Finally, in the third activity, it may catalyze glucan cyclization and release from the protein. NdvB is also involved in nodule invasion and in bacteroid development. In Rhizobium meliloti (strain 1021) (Ensifer meliloti), this protein is Cyclic beta-(1,2)-glucan synthase NdvB.